A 130-amino-acid chain; its full sequence is Small ribosomal subunit protein uS4 (130 aa).

Lys-64 carries the post-translational modification N6-acetyllysine. Lys-91 participates in a covalent cross-link: Glycyl lysine isopeptide (Lys-Gly) (interchain with G-Cter in SUMO2). Positions 106 to 130 constitute an S4 RNA-binding domain; that stretch reads RRLQTQVFKLGLAXSIHHXRVLIRQ. At Lys-114 the chain carries N6-acetyllysine.

Belongs to the universal ribosomal protein uS4 family. Component of the small ribosomal subunit. Identified in a IGF2BP1-dependent mRNP granule complex containing untranslated mRNAs. Part of the small subunit (SSU) processome, composed of more than 70 proteins and the RNA chaperone small nucleolar RNA (snoRNA) U3.

It is found in the cytoplasm. Its subcellular location is the nucleus. It localises to the nucleolus. Functionally, component of the small ribosomal subunit. The ribosome is a large ribonucleoprotein complex responsible for the synthesis of proteins in the cell. Part of the small subunit (SSU) processome, first precursor of the small eukaryotic ribosomal subunit. During the assembly of the SSU processome in the nucleolus, many ribosome biogenesis factors, an RNA chaperone and ribosomal proteins associate with the nascent pre-rRNA and work in concert to generate RNA folding, modifications, rearrangements and cleavage as well as targeted degradation of pre-ribosomal RNA by the RNA exosome. This chain is Small ribosomal subunit protein uS4 (RPS9), found in Sus scrofa (Pig).